We begin with the raw amino-acid sequence, 207 residues long: Small ribosomal subunit protein uS4 (207 aa).

The interval 31-51 (KCKLDSKPGQHGRTSGARTSD) is disordered. The 66-residue stretch at 97–162 (SRLDNVVYRM…QGRIRESLDL (66 aa)) folds into the S4 RNA-binding domain.

The protein belongs to the universal ribosomal protein uS4 family. Part of the 30S ribosomal subunit. Contacts protein S5. The interaction surface between S4 and S5 is involved in control of translational fidelity.

In terms of biological role, one of the primary rRNA binding proteins, it binds directly to 16S rRNA where it nucleates assembly of the body of the 30S subunit. Functionally, with S5 and S12 plays an important role in translational accuracy. The sequence is that of Small ribosomal subunit protein uS4 from Bordetella bronchiseptica (strain ATCC BAA-588 / NCTC 13252 / RB50) (Alcaligenes bronchisepticus).